Reading from the N-terminus, the 204-residue chain is N-(5'-phosphoribosyl)anthranilate isomerase (204 aa).

The protein belongs to the TrpF family.

The enzyme catalyses N-(5-phospho-beta-D-ribosyl)anthranilate = 1-(2-carboxyphenylamino)-1-deoxy-D-ribulose 5-phosphate. Its pathway is amino-acid biosynthesis; L-tryptophan biosynthesis; L-tryptophan from chorismate: step 3/5. The polypeptide is N-(5'-phosphoribosyl)anthranilate isomerase (Bacillus cereus (strain Q1)).